Here is a 1411-residue protein sequence, read N- to C-terminus: Zinc finger protein 609 (1411 aa).

Disordered regions lie at residues 1 to 26, 47 to 190, 353 to 484, 517 to 659, 679 to 963, 1005 to 1125, 1153 to 1221, and 1270 to 1367; these read MSLS…SGDE, QKLE…QPVP, PRFC…EPTV, AHAH…ARPI, ASPG…VIQQ, YEEQ…RQAE, KSED…LTQH, and GSKV…STHH. 3 positions are modified to phosphoserine: Ser358, Ser361, and Ser379. A compositionally biased stretch (polar residues) spans 377–401; it reads PNSNTPVNETATASDSKGTSNSSKT. The residue at position 381 (Thr381) is a Phosphothreonine. 6 positions are modified to phosphoserine: Ser413, Ser433, Ser446, Ser452, Ser467, and Ser470. Residues 423-437 show a composition bias toward polar residues; the sequence is ASSTSEDVKASPSSA. Lys479 participates in a covalent cross-link: Glycyl lysine isopeptide (Lys-Gly) (interchain with G-Cter in SUMO2). The segment at 495–520 adopts a C2H2-type zinc-finger fold; sequence IDCPHPNCNKKYKHINGLKYHQAHAH. Over residues 519 to 529 the composition is skewed to basic and acidic residues; it reads AHTDDDSKPEA. The residue at position 533 (Ser533) is a Phosphoserine. Residues 549-563 are compositionally biased toward polar residues; it reads NGASVSQKGSLSPAR. A phosphoserine mark is found at Ser576 and Ser578. Positions 626-649 are enriched in basic and acidic residues; it reads SLERKCMEKEKCKKPSSLKPEKIP. A compositionally biased stretch (polar residues) spans 679–700; that stretch reads ASPGSSSGLTATVAQAMPNSPQ. The span at 726 to 736 shows a compositional bias: basic residues; sequence DKKKKDKKKKE. Residue Ser743 is modified to Phosphoserine. Position 746 is a phosphothreonine (Thr746). The span at 751–764 shows a compositional bias: basic and acidic residues; it reads CRAEEGKSPFRESS. Ser758 carries the post-translational modification Phosphoserine. Lys789 participates in a covalent cross-link: Glycyl lysine isopeptide (Lys-Gly) (interchain with G-Cter in SUMO2). Residues 798–844 show a composition bias toward polar residues; sequence FTDNAPSPSIGGSSRLENTTPTQPLTPLHVVTQNGAEASSVKTNSPA. Position 804 is a phosphoserine (Ser804). Thr823 is subject to Phosphothreonine. Residues Ser842, Ser846, and Ser849 each carry the phosphoserine modification. Over residues 855 to 876 the composition is skewed to basic and acidic residues; sequence GEGKVDSVKSKDAEQLVKEGAK. Positions 897-908 are enriched in low complexity; that stretch reads SYYSPSYAQSSP. Over residues 926–950 the composition is skewed to basic and acidic residues; sequence TKRDEEPESIEGKVKNDICEEKKPE. Over residues 952–963 the composition is skewed to low complexity; it reads SSSSQQPSVIQQ. A compositionally biased stretch (basic and acidic residues) spans 1020–1042; it reads GVDKKAEMGLKEREAALKEEWKQ. Ser1055 carries the phosphoserine modification. Lys1061 participates in a covalent cross-link: Glycyl lysine isopeptide (Lys-Gly) (interchain with G-Cter in SUMO2). 3 stretches are compositionally biased toward basic and acidic residues: residues 1097–1113, 1153–1187, and 1195–1208; these read LKVK…EASE, KSED…KEST, and TSEE…EPRP. Lys1153 is covalently cross-linked (Glycyl lysine isopeptide (Lys-Gly) (interchain with G-Cter in SUMO2)). The segment covering 1286 to 1296 has biased composition (polar residues); that stretch reads PSVTCKSSSES. Lys1297 participates in a covalent cross-link: Glycyl lysine isopeptide (Lys-Gly) (interchain with G-Cter in SUMO2). Over residues 1328–1337 the composition is skewed to gly residues; sequence GCGVVGGGGS.

As to quaternary structure, interacts (via N-terminus) with NIPBL. Interacts with INTS13; promoting association with the integrator complex. As to expression, isoform 1: Expressed in myoblasts and myotubes. Isoform 2: Expressed in myoblasts and myotubes, with a preference in undifferentiated myoblasts.

Its subcellular location is the nucleus. Transcription factor, which activates RAG1, and possibly RAG2, transcription. Through the regulation of RAG1/2 expression, may regulate thymocyte maturation. Along with NIPBL and the multiprotein complex Integrator, promotes cortical neuron migration during brain development by regulating the transcription of crucial genes in this process. Preferentially binds promoters containing paused RNA polymerase II. Up-regulates the expression of SEMA3A, NRP1, PLXND1 and GABBR2 genes, among others. In terms of biological role, involved in the regulation of myoblast proliferation during myogenesis. The sequence is that of Zinc finger protein 609 from Homo sapiens (Human).